We begin with the raw amino-acid sequence, 372 residues long: N-methyl-L-tryptophan oxidase (372 aa).

4-34 (DLIIIGSGSVGAAAGYYATRAGLNVLMTDAH) lines the FAD pocket. Cys308 carries the S-8alpha-FAD cysteine modification.

It belongs to the MSOX/MTOX family. MTOX subfamily. As to quaternary structure, monomer. FAD is required as a cofactor.

The enzyme catalyses N(alpha)-methyl-L-tryptophan + O2 + H2O = L-tryptophan + formaldehyde + H2O2. Functionally, catalyzes the oxidative demethylation of N-methyl-L-tryptophan. The polypeptide is N-methyl-L-tryptophan oxidase (Escherichia coli O9:H4 (strain HS)).